Here is a 361-residue protein sequence, read N- to C-terminus: D-alanine--D-alanine ligase (361 aa).

The ATP-grasp domain maps to 134–344 (KLLLKSFNIP…FKDLVDNLIN (211 aa)). Residue 167–222 (REALGYPVIVKPAVLGSSIGINVAYSENQIEFFIEEALKYDLTILIEKFIEAREIE) coordinates ATP. Positions 297, 311, and 313 each coordinate Mg(2+).

This sequence belongs to the D-alanine--D-alanine ligase family. It depends on Mg(2+) as a cofactor. The cofactor is Mn(2+).

The protein localises to the cytoplasm. It catalyses the reaction 2 D-alanine + ATP = D-alanyl-D-alanine + ADP + phosphate + H(+). The protein operates within cell wall biogenesis; peptidoglycan biosynthesis. Cell wall formation. This Borrelia garinii subsp. bavariensis (strain ATCC BAA-2496 / DSM 23469 / PBi) (Borreliella bavariensis) protein is D-alanine--D-alanine ligase.